The primary structure comprises 332 residues: MTSTNEPIPTEEEIKNGFKFIQDEICKFLITTTGGHQQYSEDKWDYTKGSGGGISRVWEGKEEEGFYLNQDYQSQNNKCDKIEKGGVNFSYIVGSNLPSAAATQFKIAPDTKYIATGVSLVIHPYNPNVPTIHMNVRYFEAGDVWWFGGGVDLTPVYPKLDQVVEFHSTLKKVCDQYGQEENKTSYALGKAECDSYFFLPHRGETRGVGGLFFDHLKSDKAKTWKFIYQLGLSFIDLYKPFLVNNSSISYDKVQREYQLYRRSRYVEFNLLFDRGTKFGILSEGRTESILMSLPAVCKWKYNYKPEENTPEANLLTFLRPRDWLNENQENKN.

Residue S119 participates in coproporphyrinogen III binding. The active-site Proton donor is the H133. Coproporphyrinogen III is bound by residues 135–137 (NVR) and 284–285 (GR).

The protein belongs to the aerobic coproporphyrinogen-III oxidase family. As to quaternary structure, homodimer.

It catalyses the reaction coproporphyrinogen III + O2 + 2 H(+) = protoporphyrinogen IX + 2 CO2 + 2 H2O. The protein operates within porphyrin-containing compound metabolism; protoporphyrin-IX biosynthesis; protoporphyrinogen-IX from coproporphyrinogen-III (O2 route): step 1/1. In terms of biological role, involved in the heme biosynthesis. Catalyzes the aerobic oxidative decarboxylation of propionate groups of rings A and B of coproporphyrinogen-III to yield the vinyl groups in protoporphyrinogen-IX. This Dictyostelium discoideum (Social amoeba) protein is Oxygen-dependent coproporphyrinogen-III oxidase (cpox).